Here is a 476-residue protein sequence, read N- to C-terminus: Aspartyl/glutamyl-tRNA(Asn/Gln) amidotransferase subunit B (476 aa).

It belongs to the GatB/GatE family. GatB subfamily. Heterotrimer of A, B and C subunits.

The catalysed reaction is L-glutamyl-tRNA(Gln) + L-glutamine + ATP + H2O = L-glutaminyl-tRNA(Gln) + L-glutamate + ADP + phosphate + H(+). It carries out the reaction L-aspartyl-tRNA(Asn) + L-glutamine + ATP + H2O = L-asparaginyl-tRNA(Asn) + L-glutamate + ADP + phosphate + 2 H(+). Allows the formation of correctly charged Asn-tRNA(Asn) or Gln-tRNA(Gln) through the transamidation of misacylated Asp-tRNA(Asn) or Glu-tRNA(Gln) in organisms which lack either or both of asparaginyl-tRNA or glutaminyl-tRNA synthetases. The reaction takes place in the presence of glutamine and ATP through an activated phospho-Asp-tRNA(Asn) or phospho-Glu-tRNA(Gln). The polypeptide is Aspartyl/glutamyl-tRNA(Asn/Gln) amidotransferase subunit B (Listeria monocytogenes serotype 4b (strain CLIP80459)).